A 461-amino-acid polypeptide reads, in one-letter code: Complement C1r subcomponent-like protein (461 aa).

An N-terminal signal peptide occupies residues 1–22; it reads MCWLLLWGILHTCPTQASVLLA. A CUB domain is found at 23-139; it reads QQFPQQLTSP…KGFLALYQAA (117 aa). Intrachain disulfides connect C71-C89 and C164-C197. The Sushi domain occupies 138–199; sequence AAVSQPNGDA…RGEEVPECVP (62 aa). In terms of domain architecture, Peptidase S1 spans 214-453; it reads TFGSSRAKPG…YVDWIKGVIE (240 aa). H252 serves as the catalytic Charge relay system. An N-linked (GlcNAc...) asparagine glycan is attached at N265. The active-site Charge relay system is the D308. Residue N332 is glycosylated (N-linked (GlcNAc...) asparagine). Cystine bridges form between C371–C390 and C401–C431. Catalysis depends on S405, which acts as the Charge relay system.

It belongs to the peptidase S1 family.

The protein localises to the secreted. In terms of biological role, mediates the proteolytic cleavage of HP/haptoglobin in the endoplasmic reticulum. The sequence is that of Complement C1r subcomponent-like protein (C1rl) from Rattus norvegicus (Rat).